The chain runs to 432 residues: Adenylosuccinate synthetase (432 aa).

GTP is bound by residues 12–18 (GDEGKGK) and 40–42 (GHT). Asp-13 functions as the Proton acceptor in the catalytic mechanism. Residues Asp-13 and Gly-40 each contribute to the Mg(2+) site. Residues 13–16 (DEGK), 38–41 (NAGH), Thr-130, Arg-144, Gln-226, Thr-241, and Arg-305 contribute to the IMP site. His-41 acts as the Proton donor in catalysis. 301–307 (STTGRSR) lines the substrate pocket. GTP-binding positions include Arg-307, 333 to 335 (KLD), and 415 to 417 (SVG).

This sequence belongs to the adenylosuccinate synthetase family. In terms of assembly, homodimer. Mg(2+) is required as a cofactor.

Its subcellular location is the cytoplasm. It catalyses the reaction IMP + L-aspartate + GTP = N(6)-(1,2-dicarboxyethyl)-AMP + GDP + phosphate + 2 H(+). Its pathway is purine metabolism; AMP biosynthesis via de novo pathway; AMP from IMP: step 1/2. Functionally, plays an important role in the de novo pathway of purine nucleotide biosynthesis. Catalyzes the first committed step in the biosynthesis of AMP from IMP. This Bdellovibrio bacteriovorus (strain ATCC 15356 / DSM 50701 / NCIMB 9529 / HD100) protein is Adenylosuccinate synthetase.